We begin with the raw amino-acid sequence, 357 residues long: MLPVCHRFCDHLLLLLLLPSTTLAPAPASMGPAAALLQVLGLPEAPRSVPTHRPVPPVMWRLFRRRDPQEARVGRPLRPCHVEELGVAGNIVRHIPDSGLSSRPAQPARTSGLCPEWTVVFDLSNVEPTERPTRARLELRLEAESEDTGGWELSVALWADAEHPGPELLRVPAPPGVLLRADLLGTAVAANASVPCTVRLALSLHPGATAACGRLAEASLLLVTLDPRLCPLPRLRRHTEPRVEVGPVGTCRTRRLHVSFREVGWHRWVIAPRGFLANFCQGTCALPETLRGPGGPPALNHAVLRALMHAAAPTPGAGSPCCVPERLSPISVLFFDNSDNVVLRHYEDMVVDECGCR.

An N-terminal signal peptide occupies residues 1-23; the sequence is MLPVCHRFCDHLLLLLLLPSTTL. Residues 24 to 237 constitute a propeptide that is removed on maturation; the sequence is APAPASMGPA…RLCPLPRLRR (214 aa). Asparagine 191 is a glycosylation site (N-linked (GlcNAc...) asparagine). Intrachain disulfides connect cysteine 251–cysteine 322, cysteine 280–cysteine 354, and cysteine 284–cysteine 356.

The protein belongs to the TGF-beta family. In terms of assembly, homodimer; disulfide-linked. As to expression, expressed almost exclusively in the nervous system.

Its subcellular location is the secreted. Functionally, may mediate cell differentiation events during embryonic development. The polypeptide is Embryonic growth/differentiation factor 1 (Gdf1) (Mus musculus (Mouse)).